We begin with the raw amino-acid sequence, 410 residues long: Protein trichome birefringence-like 34 (410 aa).

Residues 13–33 (TSFHTIAAVLVAGLIFTAVFL) form a helical; Signal-anchor for type II membrane protein membrane-spanning segment. A GDS motif motif is present at residues 133-135 (GDS). A DCXHWCLPGXXDXWN motif motif is present at residues 383–397 (DCIHWCLPGVPDVWN).

The protein belongs to the PC-esterase family. TBL subfamily.

It localises to the golgi apparatus membrane. In terms of biological role, may act as a bridging protein that binds pectin and other cell wall polysaccharides. Probably involved in maintaining esterification of pectins. May be involved in the specific O-acetylation of cell wall polymers. This Arabidopsis thaliana (Mouse-ear cress) protein is Protein trichome birefringence-like 34 (TBL34).